Here is a 451-residue protein sequence, read N- to C-terminus: MNLKLHIKTYGCQMNQYDSSKIVDLLKNTHKYQLTDIAEEADILLLNTCSIREKAQEKLFHQLGRWRRLKKINPNLIIGVGGCVASQEGSNIRERANYVDIIFGPQTLHRLPEMINHVRITRSPVIDISFPEIEKFDCMPKPQAKGPTAFVSIIEGCDKYCSYCVVPYTRGIEVSRPCEDILLEINNLADQNVREIHLLGQNVNAYRGTRYGGGTCTFAELLRLVAAINGIDRIRFTTSHPIEFTDDLIDVYRDTPELVSFVHLPVQSGSDRILALMKRGHTVLEYKSIIRKLYAVRPSIQISSDFIVGFPGETEEDFRQTMNLISEVNFDMSFSFIYSPRPGTPAANMVDIVSQDEKKQRLYILQECIRKQAMKFSQAMKGTVQCILVEGTSRKNIMHLSGRTENNRVVNFIGNNGMIGQFVNVEIIDVYSNSLRGELISNQEKKYTLSA.

The region spanning leucine 3–isoleucine 120 is the MTTase N-terminal domain. Positions 12, 49, 83, 157, 161, and 164 each coordinate [4Fe-4S] cluster. Residues glutamine 143 to lysine 375 enclose the Radical SAM core domain. A TRAM domain is found at glutamine 378–serine 441.

It belongs to the methylthiotransferase family. MiaB subfamily. Monomer. The cofactor is [4Fe-4S] cluster.

The protein resides in the cytoplasm. The enzyme catalyses N(6)-dimethylallyladenosine(37) in tRNA + (sulfur carrier)-SH + AH2 + 2 S-adenosyl-L-methionine = 2-methylsulfanyl-N(6)-dimethylallyladenosine(37) in tRNA + (sulfur carrier)-H + 5'-deoxyadenosine + L-methionine + A + S-adenosyl-L-homocysteine + 2 H(+). Its function is as follows. Catalyzes the methylthiolation of N6-(dimethylallyl)adenosine (i(6)A), leading to the formation of 2-methylthio-N6-(dimethylallyl)adenosine (ms(2)i(6)A) at position 37 in tRNAs that read codons beginning with uridine. The chain is tRNA-2-methylthio-N(6)-dimethylallyladenosine synthase from Baumannia cicadellinicola subsp. Homalodisca coagulata.